We begin with the raw amino-acid sequence, 259 residues long: DNA repair protein RecO (259 aa).

This sequence belongs to the RecO family.

Its function is as follows. Involved in DNA repair and RecF pathway recombination. This chain is DNA repair protein RecO, found in Rhizobium rhizogenes (strain K84 / ATCC BAA-868) (Agrobacterium radiobacter).